A 248-amino-acid chain; its full sequence is Ubiquinone biosynthesis O-methyltransferase (248 aa).

The S-adenosyl-L-methionine site is built by Arg-41, Gly-72, Asp-93, and Met-136.

It belongs to the methyltransferase superfamily. UbiG/COQ3 family.

The enzyme catalyses a 3-demethylubiquinol + S-adenosyl-L-methionine = a ubiquinol + S-adenosyl-L-homocysteine + H(+). It catalyses the reaction a 3-(all-trans-polyprenyl)benzene-1,2-diol + S-adenosyl-L-methionine = a 2-methoxy-6-(all-trans-polyprenyl)phenol + S-adenosyl-L-homocysteine + H(+). It participates in cofactor biosynthesis; ubiquinone biosynthesis. Functionally, O-methyltransferase that catalyzes the 2 O-methylation steps in the ubiquinone biosynthetic pathway. In Rhizobium etli (strain CIAT 652), this protein is Ubiquinone biosynthesis O-methyltransferase.